The sequence spans 147 residues: 3-dehydroquinate dehydratase (147 aa).

Tyrosine 24 functions as the Proton acceptor in the catalytic mechanism. Asparagine 73, histidine 79, and aspartate 86 together coordinate substrate. Histidine 99 (proton donor) is an active-site residue. Residues 100-101 (LS) and arginine 110 contribute to the substrate site.

Belongs to the type-II 3-dehydroquinase family. Homododecamer.

The enzyme catalyses 3-dehydroquinate = 3-dehydroshikimate + H2O. It functions in the pathway metabolic intermediate biosynthesis; chorismate biosynthesis; chorismate from D-erythrose 4-phosphate and phosphoenolpyruvate: step 3/7. Functionally, catalyzes a trans-dehydration via an enolate intermediate. This chain is 3-dehydroquinate dehydratase, found in Hyphomonas neptunium (strain ATCC 15444).